Reading from the N-terminus, the 414-residue chain is Phosphoglycerate kinase (414 aa).

Residues aspartate 20 to asparagine 22, arginine 37, histidine 60 to arginine 63, arginine 117, and arginine 164 each bind substrate. ATP-binding positions include glutamate 338 and glycine 364–leucine 367.

It belongs to the phosphoglycerate kinase family. Monomer.

The protein localises to the cytoplasm. The enzyme catalyses (2R)-3-phosphoglycerate + ATP = (2R)-3-phospho-glyceroyl phosphate + ADP. Its pathway is carbohydrate degradation; glycolysis; pyruvate from D-glyceraldehyde 3-phosphate: step 2/5. The chain is Phosphoglycerate kinase from Methanococcus maripaludis (strain DSM 14266 / JCM 13030 / NBRC 101832 / S2 / LL).